We begin with the raw amino-acid sequence, 775 residues long: Coiled-coil domain-containing protein R3HCC1L (775 aa).

Basic and acidic residues-rich tracts occupy residues 1–16 (MQQEAERCRVRTKRPD) and 65–112 (ESQR…KGAE). Disordered stretches follow at residues 1-127 (MQQE…HRAP) and 235-262 (LSSDSETAPSSLETPDGMSKHSPGDISV). The tract at residues 7 to 27 (RCRVRTKRPDMALYVPKARRG) is EJC-binding motif; may mediate interaction with the EJC. Polar residues predominate over residues 235-247 (LSSDSETAPSSLE). A Phosphoserine modification is found at Ser-671. At Thr-695 the chain carries Phosphothreonine. The stretch at 734-766 (RSKQSKTEREAELRKLQEARERKRLEAKQREDI) forms a coiled coil. The disordered stretch occupies residues 755–775 (RKRLEAKQREDIWEGRDQSVV).

May interact with the exon junction complex (EJC) composed at least of CASC3, EIF4A3, MAGOH and RBM8A.

This is Coiled-coil domain-containing protein R3HCC1L (R3hcc1l) from Mus musculus (Mouse).